The sequence spans 78 residues: Apolipoprotein C-I (78 aa).

The signal sequence occupies residues 1–26 (MRLILWLPVLVVVLLMVLEGPAPAQG).

The protein belongs to the apolipoprotein C1 family.

It is found in the secreted. Functionally, inhibitor of lipoprotein binding to the low density lipoprotein (LDL) receptor, LDL receptor-related protein, and very low density lipoprotein (VLDL) receptor. Associates with high density lipoproteins (HDL) and the triacylglycerol-rich lipoproteins in the plasma and makes up about 10% of the protein of the VLDL and 2% of that of HDL. Appears to interfere directly with fatty acid uptake and is also the major plasma inhibitor of cholesteryl ester transfer protein (CETP). Binds free fatty acids and reduces their intracellular esterification. Modulates the interaction of APOE with beta-migrating VLDL and inhibits binding of beta-VLDL to the LDL receptor-related protein. The polypeptide is Apolipoprotein C-I (APOC1) (Puma concolor (Mountain lion)).